Reading from the N-terminus, the 151-residue chain is UPF0178 protein Desal_2673 (151 aa).

It belongs to the UPF0178 family.

This is UPF0178 protein Desal_2673 from Maridesulfovibrio salexigens (strain ATCC 14822 / DSM 2638 / NCIMB 8403 / VKM B-1763) (Desulfovibrio salexigens).